A 433-amino-acid chain; its full sequence is Enolase (433 aa).

Glutamine 167 serves as a coordination point for (2R)-2-phosphoglycerate. The active-site Proton donor is the glutamate 209. The Mg(2+) site is built by aspartate 246, glutamate 291, and aspartate 318. (2R)-2-phosphoglycerate is bound by residues lysine 343, arginine 372, serine 373, and lysine 394. Lysine 343 acts as the Proton acceptor in catalysis.

Belongs to the enolase family. In terms of assembly, component of the RNA degradosome, a multiprotein complex involved in RNA processing and mRNA degradation. Mg(2+) is required as a cofactor.

The protein resides in the cytoplasm. It is found in the secreted. The protein localises to the cell surface. It carries out the reaction (2R)-2-phosphoglycerate = phosphoenolpyruvate + H2O. The protein operates within carbohydrate degradation; glycolysis; pyruvate from D-glyceraldehyde 3-phosphate: step 4/5. Functionally, catalyzes the reversible conversion of 2-phosphoglycerate (2-PG) into phosphoenolpyruvate (PEP). It is essential for the degradation of carbohydrates via glycolysis. This chain is Enolase, found in Shewanella frigidimarina (strain NCIMB 400).